The chain runs to 347 residues: Heat-inducible transcription repressor HrcA (347 aa).

This sequence belongs to the HrcA family.

Negative regulator of class I heat shock genes (grpE-dnaK-dnaJ and groELS operons). Prevents heat-shock induction of these operons. This Sphingopyxis alaskensis (strain DSM 13593 / LMG 18877 / RB2256) (Sphingomonas alaskensis) protein is Heat-inducible transcription repressor HrcA.